We begin with the raw amino-acid sequence, 119 residues long: Methylglyoxal synthase (119 aa).

The region spanning 1 to 119 is the MGS-like domain; it reads MKIALIAHDK…KTAELIIKQF (119 aa). Substrate-binding positions include H8, K12, 34-37, and 54-55; these read TGTT and SG. D60 functions as the Proton donor/acceptor in the catalytic mechanism. H87 is a substrate binding site.

The protein belongs to the methylglyoxal synthase family.

It catalyses the reaction dihydroxyacetone phosphate = methylglyoxal + phosphate. Its function is as follows. Catalyzes the formation of methylglyoxal from dihydroxyacetone phosphate. The chain is Methylglyoxal synthase from Clostridium beijerinckii (strain ATCC 51743 / NCIMB 8052) (Clostridium acetobutylicum).